We begin with the raw amino-acid sequence, 371 residues long: Putative RNA-binding protein Luc7-like 1 (371 aa).

Coiled coils occupy residues 87 to 177 (MDHL…RNSM) and 220 to 256 (QIRE…EERL). Over residues 232–257 (VAEKQEKRNQDRLRRREEREREERLG) the composition is skewed to basic and acidic residues. The disordered stretch occupies residues 232–371 (VAEKQEKRNQ…RSEEKEAGEI (140 aa)). The span at 258–317 (RRSGSRTRDRRRSRSRDRRRRRSRSTSRERRKFSRSRSRDRYRRHRSRSRSHSRGHRRAS) shows a compositional bias: basic residues. Basic and acidic residues-rich tracts occupy residues 318–351 (RDRS…DWRL) and 361–371 (RRSEEKEAGEI). 2 positions are modified to phosphoserine: S336 and S363.

This sequence belongs to the Luc7 family.

May bind to RNA via its Arg/Ser-rich domain. This Mus musculus (Mouse) protein is Putative RNA-binding protein Luc7-like 1 (Luc7l).